A 566-amino-acid chain; its full sequence is Proline--tRNA ligase (566 aa).

Belongs to the class-II aminoacyl-tRNA synthetase family. ProS type 1 subfamily. In terms of assembly, homodimer.

The protein localises to the cytoplasm. The enzyme catalyses tRNA(Pro) + L-proline + ATP = L-prolyl-tRNA(Pro) + AMP + diphosphate. Its function is as follows. Catalyzes the attachment of proline to tRNA(Pro) in a two-step reaction: proline is first activated by ATP to form Pro-AMP and then transferred to the acceptor end of tRNA(Pro). As ProRS can inadvertently accommodate and process non-cognate amino acids such as alanine and cysteine, to avoid such errors it has two additional distinct editing activities against alanine. One activity is designated as 'pretransfer' editing and involves the tRNA(Pro)-independent hydrolysis of activated Ala-AMP. The other activity is designated 'posttransfer' editing and involves deacylation of mischarged Ala-tRNA(Pro). The misacylated Cys-tRNA(Pro) is not edited by ProRS. The chain is Proline--tRNA ligase from Shouchella clausii (strain KSM-K16) (Alkalihalobacillus clausii).